The chain runs to 181 residues: ATP-dependent protease subunit HslV (181 aa).

The active site involves T7. Positions 162, 165, and 168 each coordinate Na(+).

Belongs to the peptidase T1B family. HslV subfamily. A double ring-shaped homohexamer of HslV is capped on each side by a ring-shaped HslU homohexamer. The assembly of the HslU/HslV complex is dependent on binding of ATP.

Its subcellular location is the cytoplasm. It catalyses the reaction ATP-dependent cleavage of peptide bonds with broad specificity.. Allosterically activated by HslU binding. Its function is as follows. Protease subunit of a proteasome-like degradation complex believed to be a general protein degrading machinery. This is ATP-dependent protease subunit HslV from Coxiella burnetii (strain RSA 331 / Henzerling II).